We begin with the raw amino-acid sequence, 513 residues long: Putative thymidine phosphorylase (513 aa).

It belongs to the thymidine/pyrimidine-nucleoside phosphorylase family. Type 2 subfamily.

The catalysed reaction is thymidine + phosphate = 2-deoxy-alpha-D-ribose 1-phosphate + thymine. This Rhodopseudomonas palustris (strain BisA53) protein is Putative thymidine phosphorylase.